Consider the following 90-residue polypeptide: Mitochondrial import inner membrane translocase subunit Tim8 A (90 aa).

The Twin CX3C motif motif lies at 36 to 59 (CWEKCMDKPGPKLDSRTEVCFVNC). 2 cysteine pairs are disulfide-bonded: Cys36–Cys59 and Cys40–Cys55.

The protein belongs to the small Tim family. As to quaternary structure, heterohexamer; composed of 3 copies of TIMM8A and 3 copies of TIMM13, named soluble 70 kDa complex. Associates with the TIM22 complex, whose core is composed of TIMM22.

Its subcellular location is the mitochondrion inner membrane. Functionally, mitochondrial intermembrane chaperone that participates in the import and insertion of some multi-pass transmembrane proteins into the mitochondrial inner membrane. Also required for the transfer of beta-barrel precursors from the TOM complex to the sorting and assembly machinery (SAM complex) of the outer membrane. Acts as a chaperone-like protein that protects the hydrophobic precursors from aggregation and guide them through the mitochondrial intermembrane space. The TIMM8-TIMM13 complex mediates the import of some proteins while the predominant TIMM9-TIMM10 70 kDa complex mediates the import of much more proteins. The protein is Mitochondrial import inner membrane translocase subunit Tim8 A (timm8a) of Danio rerio (Zebrafish).